Consider the following 277-residue polypeptide: Ribosomal RNA small subunit methyltransferase A (277 aa).

Residues Asn-18, Leu-20, Gly-45, Glu-66, Asp-89, and Asn-110 each coordinate S-adenosyl-L-methionine.

It belongs to the class I-like SAM-binding methyltransferase superfamily. rRNA adenine N(6)-methyltransferase family. RsmA subfamily.

It localises to the cytoplasm. It carries out the reaction adenosine(1518)/adenosine(1519) in 16S rRNA + 4 S-adenosyl-L-methionine = N(6)-dimethyladenosine(1518)/N(6)-dimethyladenosine(1519) in 16S rRNA + 4 S-adenosyl-L-homocysteine + 4 H(+). In terms of biological role, specifically dimethylates two adjacent adenosines (A1518 and A1519) in the loop of a conserved hairpin near the 3'-end of 16S rRNA in the 30S particle. May play a critical role in biogenesis of 30S subunits. This chain is Ribosomal RNA small subunit methyltransferase A, found in Cupriavidus taiwanensis (strain DSM 17343 / BCRC 17206 / CCUG 44338 / CIP 107171 / LMG 19424 / R1) (Ralstonia taiwanensis (strain LMG 19424)).